The chain runs to 160 residues: MKQKYSKKSKKWIYITTIIFILILDISSKRLIIKYIKTYDTKKIFSVLNFFHVHNHGAAFSFLSDQNGWQKWFLSTVSILTILVMTRIITKLKKQETKKITAYSLIIAGATGNLIDRIFYGFVVDFIDIHINDWHFATFNIADCSIFIGIIILMRINYST.

The next 3 membrane-spanning stretches (helical) occupy residues 13 to 33, 72 to 92, and 104 to 124; these read IYIT…RLII, WFLS…ITKL, and SLII…GFVV. Catalysis depends on residues aspartate 125 and aspartate 143. A helical membrane pass occupies residues 134 to 154; that stretch reads WHFATFNIADCSIFIGIIILM.

The protein belongs to the peptidase A8 family.

The protein resides in the cell inner membrane. The enzyme catalyses Release of signal peptides from bacterial membrane prolipoproteins. Hydrolyzes -Xaa-Yaa-Zaa-|-(S,diacylglyceryl)Cys-, in which Xaa is hydrophobic (preferably Leu), and Yaa (Ala or Ser) and Zaa (Gly or Ala) have small, neutral side chains.. Its pathway is protein modification; lipoprotein biosynthesis (signal peptide cleavage). In terms of biological role, this protein specifically catalyzes the removal of signal peptides from prolipoproteins. This chain is Lipoprotein signal peptidase, found in Buchnera aphidicola subsp. Acyrthosiphon pisum (strain APS) (Acyrthosiphon pisum symbiotic bacterium).